We begin with the raw amino-acid sequence, 372 residues long: NAD(P)H-quinone oxidoreductase subunit 1 (372 aa).

8 helical membrane-spanning segments follow: residues 27-47 (AIWM…GVLV), 97-117 (WLFL…YLIV), 130-150 (VGIF…LMAG), 176-196 (LALS…IDIV), 204-224 (ILGW…IAAL), 254-274 (FALF…VFAV), 308-328 (SLGI…AILL), and 351-371 (VSLV…FAFG).

It belongs to the complex I subunit 1 family. As to quaternary structure, NDH-1 is composed of at least 11 different subunits.

It is found in the cellular thylakoid membrane. It catalyses the reaction a plastoquinone + NADH + (n+1) H(+)(in) = a plastoquinol + NAD(+) + n H(+)(out). The enzyme catalyses a plastoquinone + NADPH + (n+1) H(+)(in) = a plastoquinol + NADP(+) + n H(+)(out). Functionally, NDH-1 shuttles electrons from an unknown electron donor, via FMN and iron-sulfur (Fe-S) centers, to quinones in the respiratory and/or the photosynthetic chain. The immediate electron acceptor for the enzyme in this species is believed to be plastoquinone. Couples the redox reaction to proton translocation, and thus conserves the redox energy in a proton gradient. The chain is NAD(P)H-quinone oxidoreductase subunit 1 from Microcystis aeruginosa (strain NIES-843 / IAM M-2473).